A 686-amino-acid polypeptide reads, in one-letter code: LEAF RUST 10 DISEASE-RESISTANCE LOCUS RECEPTOR-LIKE PROTEIN KINASE-like 1.3 (686 aa).

A signal peptide spans 1-33 (MFSPVLFRFSKPNSFLVLLFFLSYIHFLPCAQS). Over 34–264 (QREPCDTLFR…AGLSKKGKIG (231 aa)) the chain is Extracellular. Asparagine 76, asparagine 93, asparagine 175, asparagine 190, and asparagine 236 each carry an N-linked (GlcNAc...) asparagine glycan. Residues 265 to 285 (IGFASGFLGATLIGGCLLCIF) traverse the membrane as a helical segment. At 286–686 (IRRRKKLATQ…SSSNTTASSF (401 aa)) the chain is on the cytoplasmic side. A Protein kinase domain is found at 358-633 (ENFSKELGDG…DEIVEVLRVI (276 aa)). ATP-binding positions include 364–372 (LGDGGFGTV) and lysine 386. The residue at position 432 (tyrosine 432) is a Phosphotyrosine. Residue aspartate 482 is the Proton acceptor of the active site. Serine 515 carries the phosphoserine modification. Residues threonine 516 and threonine 521 each carry the phosphothreonine modification. Tyrosine 529 is subject to Phosphotyrosine. Residues 657–686 (GLLKHGVPPPLSPETDKTTASSSNTTASSF) are disordered. The span at 674-686 (TTASSSNTTASSF) shows a compositional bias: low complexity.

Belongs to the protein kinase superfamily. Ser/Thr protein kinase family.

It localises to the cell membrane. It catalyses the reaction L-seryl-[protein] + ATP = O-phospho-L-seryl-[protein] + ADP + H(+). The enzyme catalyses L-threonyl-[protein] + ATP = O-phospho-L-threonyl-[protein] + ADP + H(+). This Arabidopsis thaliana (Mouse-ear cress) protein is LEAF RUST 10 DISEASE-RESISTANCE LOCUS RECEPTOR-LIKE PROTEIN KINASE-like 1.3.